The primary structure comprises 386 residues: Homoserine O-succinyltransferase (386 aa).

In terms of domain architecture, AB hydrolase-1 spans 49 to 358 (NAILICHALS…DAEQGHDSFL (310 aa)). S156 (nucleophile) is an active-site residue. R226 is a binding site for substrate. Residues D321 and H354 contribute to the active site. D355 contributes to the substrate binding site.

The protein belongs to the AB hydrolase superfamily. MetX family. As to quaternary structure, homodimer.

The protein localises to the cytoplasm. The catalysed reaction is L-homoserine + succinyl-CoA = O-succinyl-L-homoserine + CoA. Its pathway is amino-acid biosynthesis; L-methionine biosynthesis via de novo pathway; O-succinyl-L-homoserine from L-homoserine: step 1/1. Functionally, transfers a succinyl group from succinyl-CoA to L-homoserine, forming succinyl-L-homoserine. This chain is Homoserine O-succinyltransferase, found in Acinetobacter baumannii (strain AB307-0294).